Reading from the N-terminus, the 361-residue chain is Free fatty acid receptor 4 (361 aa).

Residues 1 to 45 (MSPECARAAGDAPLRSLEQANRTRFPFFSDVKGDHRLVLAAVETT) are Extracellular-facing. The N-linked (GlcNAc...) asparagine glycan is linked to N21. The chain crosses the membrane as a helical span at residues 46–66 (VLVLIFAVSLLGNVCALVLVA). Over 67–77 (RRRRRGATACL) the chain is Cytoplasmic. The helical transmembrane segment at 78–98 (VLNLFCADLLFISAIPLVLAV) threads the bilayer. Over 99 to 112 (RWTEAWLLGPVACH) the chain is Extracellular. C111 and C194 are oxidised to a cystine. A helical membrane pass occupies residues 113–133 (LLFYVMTLSGSVTILTLAAVS). At 134–156 (LERMVCIVHLQRGVRGPGRRARA) the chain is on the cytoplasmic side. The helical transmembrane segment at 157-177 (VLLALIWGYSAVAALPLCVFF) threads the bilayer. At 178 to 204 (RVVPQRLPGADQEISICTLIWPTIPGE) the chain is on the extracellular side. Residues 205 to 225 (ISWDVSFVTLNFLVPGLVIVI) form a helical membrane-spanning segment. The Cytoplasmic segment spans residues 226 to 268 (SYSKILQITKASRKRLTVSLAYSESHQIRVSQQDFRLFRTLFL). Residues 269-289 (LMVSFFIMWSPIIITILLILI) traverse the membrane as a helical segment. Residues 290–295 (QNFKQD) lie on the Extracellular side of the membrane. A helical membrane pass occupies residues 296-316 (LVIWPSLFFWVVAFTFANSAL). At 317-361 (NPILYNMTLCRNEWKKIFCCFWFPEKGAILTDTSVKRNDLSIISG) the chain is on the cytoplasmic side. Phosphothreonine occurs at positions 347 and 349. A phosphoserine mark is found at S350, S357, and S360.

It belongs to the G-protein coupled receptor 1 family. In terms of assembly, interacts (via C-terminus) with ARRB2 following LCFAs stimulation. Phosphorylated at two clusters of Ser and Thr residues located in the intracellular C-terminus, a prerequisite for FFAR4 internalization via an ARRB2-dependent pathway. The predominant isoform in human tissues. Expressed in adipose tissue, pancreatic islets, lung and brain. Expressed in alpha cells of pancreatic islets. Expressed in primary cilia of perivascular preadipocytes of white adipose tissue (at protein level). As to expression, abundant expression in the intestinal tract. Expressed in colonic intraepithelial neuroendocrine cells.

It is found in the cell membrane. The protein localises to the endosome membrane. It localises to the lysosome membrane. The protein resides in the cell projection. Its subcellular location is the cilium membrane. G-protein-coupled receptor for long-chain fatty acids (LCFAs) with a major role in adipogenesis, energy metabolism and inflammation. Signals via G-protein and beta-arrestin pathways. LCFAs sensing initiates activation of phosphoinositidase C-linked G proteins GNAQ and GNA11 (G(q)/G(11)), inducing a variety of cellular responses via second messenger pathways such as intracellular calcium mobilization, modulation of cyclic adenosine monophosphate (cAMP) production, and mitogen-activated protein kinases (MAPKs). After LCFAs binding, associates with beta-arrestin ARRB2 that acts as an adapter protein coupling the receptor to specific downstream signaling pathways, as well as mediating receptor endocytosis. In response to dietary fats, plays an important role in the regulation of adipocyte proliferation and differentiation. Acts as a receptor for omega-3 polyunsaturated fatty acids (PUFAs) at primary cilium of perivascular preadipocytes, initiating an adipogenic program via cAMP and CTCF-dependent chromatin remodeling that ultimately results in transcriptional activation of adipogenic genes and cell cycle entry. Induces differentiation of brown adipocytes probably via autocrine and endocrine functions of FGF21 hormone. Activates brown adipocytes by initiating intracellular calcium signaling that leads to mitochondrial depolarization and fission, and overall increased mitochondrial respiration. Consequently stimulates fatty acid uptake and oxidation in mitochondria together with UCP1-mediated thermogenic respiration, eventually reducing fat mass. Regulates bi-potential differentiation of bone marrow mesenchymal stem cells toward osteoblasts or adipocytes likely by up-regulating distinct integrins. In response to dietary fats regulates hormone secretion and appetite. Stimulates GIP and GLP1 secretion from enteroendocrine cells as well as GCG secretion in pancreatic alpha cells, thereby playing a role in the regulation of blood glucose levels. Negatively regulates glucose-induced SST secretion in pancreatic delta cells. Mediates LCFAs inhibition of GHRL secretion, an appetite-controlling hormone. In taste buds, contributes to sensing of dietary fatty acids by the gustatory system. During the inflammatory response, promotes anti-inflammatory M2 macrophage differentiation in adipose tissue. Mediates the anti-inflammatory effects of omega-3 PUFAs via inhibition of NLRP3 inflammasome activation. In this pathway, interacts with adapter protein ARRB2 and inhibits the priming step triggered by Toll-like receptors (TLRs) at the level of TAK1 and TAB1. Further inhibits the activation step when ARRB2 directly associates with NLRP3, leading to inhibition of pro-inflammatory cytokine release. Mediates LCFAs anti-apoptotic effects. Functionally, receptor for LCFAs decoupled from G-protein signaling. May signal through beta-arrestin pathway. After LCFAs binding, associates with beta-arrestin ARRB2 that may act as an adapter protein coupling the receptor to specific downstream signaling pathways, as well as mediating receptor endocytosis. This is Free fatty acid receptor 4 from Homo sapiens (Human).